The primary structure comprises 486 residues: Cardiolipin synthase A (486 aa).

The next 2 membrane-spanning stretches (helical) occupy residues 3 to 23 (TVYTLVSWLAILGYWLLIAGV) and 38 to 58 (MAWLLIIYILPLVGIIAYLAV). PLD phosphodiesterase domains lie at 219–246 (MDLRQHRKMIMIDNYIAYTGSMNMVDPR) and 399–426 (EGGLLHTKSVLVDGELSLVGTVNLDMRS). Residues H224, K226, D231, H404, K406, and D411 contribute to the active site.

Belongs to the phospholipase D family. Cardiolipin synthase subfamily. ClsA sub-subfamily.

The protein resides in the cell inner membrane. The enzyme catalyses 2 a 1,2-diacyl-sn-glycero-3-phospho-(1'-sn-glycerol) = a cardiolipin + glycerol. Its function is as follows. Catalyzes the reversible phosphatidyl group transfer from one phosphatidylglycerol molecule to another to form cardiolipin (CL) (diphosphatidylglycerol) and glycerol. This Shigella dysenteriae serotype 1 (strain Sd197) protein is Cardiolipin synthase A.